The primary structure comprises 915 residues: MDYKETIELPSTTFPMRASLPENEPKRYEKWREEKVYAKMQKNREGAKECFNLHDGPPYANGHLHIGHALNKILKDTIVKYHYFQGKKVSYVPGWDCHGLPIEQQVEKKLGKEKKDSLPKEKIRELCRAHAAEFIAIQKSEFLELGVVGDFENPYKTMDFPFEAAIYRALCQIAQKGLLAERSKPVYWSWACKTALAEAEVEYQDKVSDSVYVAFPLQKEALERLGVKRAVLVIWTTTPWTLPANVAVALRPKELYVLMSDGKVVAKNLVEKLTALGVVGGSILQEFDSSTLENLLAQNPLNGRDSRIVLGEHVEVSDGTGCVHTAPGHGEDDYRVGLRYNLPVLMPVDDEGRFDETIQRESLLPEADSFVGMHIFEAQKRILGLLGDALLKHTQITHSYPHCWRSHEPVIFRATKQWFVLMDESIQGVGKSLREIALEEIQKTCFYPDHGIKRLGSMIENRPDWCISRQRDWGVPIAFFRDRQSGEMIFDAEVLEHIAGIFEQEGCDAWWSRDNAYLLPASWKNRADSLEKIHHILDVWFDSGSTWKAVLLSSAYEAGNYPASMYLEGSDQHRGWFQSSLLVSCAINHHAPYQSILTHGFTVDEKGEKMSKSKGNVIAPKDVLKEFGSEILRLWVASSDYQSDLKISQNILKQVAENYRKIRNTIRFLLANTNDLERLSPLEDLSEIDRWFMQEARVALEETNALFGRYDFSKGLQEINYFITNALSGIYLDLCKDSLYCDGKNSKTRRASQSAMAYTLRALLATLAPVLTYTVDEALEHAGEVLKGGAQSVFDLVYEPLPLVEAPKVDFVKLEELRAKFFEVVDGLKKEKRLKNTLEVNLLLPPKEEDFGGLAKWMMVSEVLKEAKGEELASFELAGLTYRLLRATLHRCPRCWQFVSPKEETLCERCAGAIG.

Positions 58–68 (PYANGHLHIGH) match the 'HIGH' region motif. Residue Glu568 coordinates L-isoleucyl-5'-AMP. The short motif at 609 to 613 (KMSKS) is the 'KMSKS' region element. Residue Lys612 coordinates ATP. Residues Cys892, Cys895, Cys907, and Cys910 each coordinate Zn(2+).

Belongs to the class-I aminoacyl-tRNA synthetase family. IleS type 1 subfamily. As to quaternary structure, monomer. Zn(2+) serves as cofactor.

The protein resides in the cytoplasm. The catalysed reaction is tRNA(Ile) + L-isoleucine + ATP = L-isoleucyl-tRNA(Ile) + AMP + diphosphate. Functionally, catalyzes the attachment of isoleucine to tRNA(Ile). As IleRS can inadvertently accommodate and process structurally similar amino acids such as valine, to avoid such errors it has two additional distinct tRNA(Ile)-dependent editing activities. One activity is designated as 'pretransfer' editing and involves the hydrolysis of activated Val-AMP. The other activity is designated 'posttransfer' editing and involves deacylation of mischarged Val-tRNA(Ile). The chain is Isoleucine--tRNA ligase from Wolinella succinogenes (strain ATCC 29543 / DSM 1740 / CCUG 13145 / JCM 31913 / LMG 7466 / NCTC 11488 / FDC 602W) (Vibrio succinogenes).